Consider the following 726-residue polypeptide: Catalase-peroxidase (726 aa).

Residues 91–214 (WHAAGTYRIG…LAAVQMGLIY (124 aa)) constitute a cross-link (tryptophyl-tyrosyl-methioninium (Trp-Tyr) (with M-240)). The active-site Proton acceptor is His-92. Positions 214 to 240 (YVNPEGPNGNPDPVAAAIDIRETFRRM) form a cross-link, tryptophyl-tyrosyl-methioninium (Tyr-Met) (with W-91). Position 255 (His-255) interacts with heme b. Positions 335-362 (AHQWKPKGNAGAGTVPDPADPSKRRSPS) are disordered.

The protein belongs to the peroxidase family. Peroxidase/catalase subfamily. Homodimer or homotetramer. Requires heme b as cofactor. Post-translationally, formation of the three residue Trp-Tyr-Met cross-link is important for the catalase, but not the peroxidase activity of the enzyme.

The catalysed reaction is H2O2 + AH2 = A + 2 H2O. The enzyme catalyses 2 H2O2 = O2 + 2 H2O. Bifunctional enzyme with both catalase and broad-spectrum peroxidase activity. The chain is Catalase-peroxidase from Cupriavidus metallidurans (strain ATCC 43123 / DSM 2839 / NBRC 102507 / CH34) (Ralstonia metallidurans).